The primary structure comprises 459 residues: Putative flavin-containing monooxygenase 2 (459 aa).

Residues 17–21, E38, and 46–47 contribute to the FAD site; these read GAGVS and VW. Residue 217–220 participates in NADP(+) binding; that stretch reads SAID.

Belongs to the FMO family. The cofactor is FAD.

The sequence is that of Putative flavin-containing monooxygenase 2 (FMO2) from Arabidopsis thaliana (Mouse-ear cress).